A 707-amino-acid chain; its full sequence is Ribosomal RNA large subunit methyltransferase K/L (707 aa).

Positions 43 to 154 (QIYRCCLWSR…KDKAILGVDM (112 aa)) constitute a THUMP domain.

Belongs to the methyltransferase superfamily. RlmKL family.

It localises to the cytoplasm. The enzyme catalyses guanosine(2445) in 23S rRNA + S-adenosyl-L-methionine = N(2)-methylguanosine(2445) in 23S rRNA + S-adenosyl-L-homocysteine + H(+). The catalysed reaction is guanosine(2069) in 23S rRNA + S-adenosyl-L-methionine = N(2)-methylguanosine(2069) in 23S rRNA + S-adenosyl-L-homocysteine + H(+). In terms of biological role, specifically methylates the guanine in position 2445 (m2G2445) and the guanine in position 2069 (m7G2069) of 23S rRNA. This is Ribosomal RNA large subunit methyltransferase K/L from Vibrio campbellii (strain ATCC BAA-1116).